The primary structure comprises 191 residues: GDP-mannose pyrophosphatase (191 aa).

Residues Tyr-17, Lys-38–Glu-40, Arg-67, and Ala-85–Leu-87 each bind GDP-alpha-D-mannose. The region spanning Asp-43–Leu-180 is the Nudix hydrolase domain. Mg(2+)-binding residues include Ala-85, Glu-100, and Glu-104. Positions Gly-86 to Gly-106 match the Nudix box motif. GDP-alpha-D-mannose is bound by residues Glu-104, Glu-127, Asp-150 to Glu-151, and Lys-176. Glu-151 contributes to the Mg(2+) binding site.

Belongs to the Nudix hydrolase family. NudK subfamily. Homodimer. Mg(2+) serves as cofactor.

The enzyme catalyses GDP-alpha-D-mannose + H2O = alpha-D-mannose 1-phosphate + GMP + 2 H(+). In terms of biological role, nucleoside diphosphate sugar hydrolase that hydrolyzes GDP-mannose as its preferred substrate, yielding GMP and mannose-1-phosphate. This is GDP-mannose pyrophosphatase (nudK) from Escherichia coli (strain SMS-3-5 / SECEC).